Here is an 86-residue protein sequence, read N- to C-terminus: Candiduxin-1 (86 aa).

The N-terminal stretch at 1–21 (MKTLLLTLVVLTIACLDLGYT) is a signal peptide. 4 disulfides stabilise this stretch: Cys24–Cys45, Cys38–Cys62, Cys66–Cys78, and Cys79–Cys84.

It belongs to the three-finger toxin family. Short-chain subfamily. Orphan group IX sub-subfamily. Expressed by the venom gland.

It is found in the secreted. This is Candiduxin-1 from Bungarus candidus (Malayan krait).